Reading from the N-terminus, the 234-residue chain is MPIYLLSDEHPELFPPPERADKSGVVAVGGDLRPERLLAAYARGIFPWYSEGDPILWHSPDPRFVLSPDKLHVGRSLRKTMARGIYEVRYDTAFRRVITECSQVPRPGQTGTWITEEMMEAYVTLHEAGFAHSVEAWAEGELKGGLYGVSLGAAFFGESMFALAPDASKVAFVTAAERFQGWGFQLIDCQVETEHLARFGAENWPRRRFLSALARAMKEPTRRGKWTEGAAADP.

It belongs to the L/F-transferase family.

Its subcellular location is the cytoplasm. The catalysed reaction is N-terminal L-lysyl-[protein] + L-leucyl-tRNA(Leu) = N-terminal L-leucyl-L-lysyl-[protein] + tRNA(Leu) + H(+). It catalyses the reaction N-terminal L-arginyl-[protein] + L-leucyl-tRNA(Leu) = N-terminal L-leucyl-L-arginyl-[protein] + tRNA(Leu) + H(+). It carries out the reaction L-phenylalanyl-tRNA(Phe) + an N-terminal L-alpha-aminoacyl-[protein] = an N-terminal L-phenylalanyl-L-alpha-aminoacyl-[protein] + tRNA(Phe). Functionally, functions in the N-end rule pathway of protein degradation where it conjugates Leu, Phe and, less efficiently, Met from aminoacyl-tRNAs to the N-termini of proteins containing an N-terminal arginine or lysine. The chain is Leucyl/phenylalanyl-tRNA--protein transferase from Myxococcus xanthus (strain DK1622).